The chain runs to 235 residues: MAEDEIVVEEEQSQPQEITPVPPSSSSSPSLVVEDDDEMKLKHLEFIQVAAVYFAACFSTLYELAKDNAGPLKLGVENIEDCVRTVLAPLYEKFHDVPFKLLLFVDRKVDDVFFDVETYVPSLVKQASSQALTVATEVQRTGVVDTTKSIARSVRDKYEPAAEYYAATLWRLLNQLPLFPEVAHLVIPTAFYWSEKYNDAVRYVGDRDYFGAEYLPMIPIEKISDILEQDQCRAD.

Residues 1–12 are compositionally biased toward acidic residues; sequence MAEDEIVVEEEQ. The segment at 1–32 is disordered; it reads MAEDEIVVEEEQSQPQEITPVPPSSSSSPSLV.

Belongs to the REF/SRPP family.

In Arabidopsis thaliana (Mouse-ear cress), this protein is REF/SRPP-like protein At2g47780.